The sequence spans 1051 residues: MSTDVSERGAEAGSSSGLLSSPCVGDGSDSAQMKKRNTETAGMKARKKLRSEESGLSTLVSIASFGGQASPDRSKVSKQQNGASGHRPVTSCTHCRQHKIKCNASENFPSSCSRCERMGLQCEIDPQFRPKKGSQLQNLKNEIEELKTKLEFLLRSEGILSSAMRNSDLGRQILQAIKLQDSPQQQTGISVQTYLASEPELLKSESSVKSSVNTPSGSYSASAVDVSRAKTNSVPPLLNDSAPANSNRESLPPVLQMALKYHNSSHNTPIDTPSSHTTPMLSPEVKKPVVATTNAMPLLPSPYANIDEFVLGDVHIPIDKAKELHHIFVKKYLPYFPIMTTDSVTELYSQSQLLFWTIMLTACLSDPEPTLYNSLASLIKQLAIETCWIRTPRSTHISQALLILCNWPLPNQKVLDDCSYRFVGLAKSLSFQLGLHRGEFMSEFTRTQTLMPDAEKWRTRTWLGIFFAEQCWSSILGLPSTSQTDYFIEQARRGKFDLPVRFHRLLCLAHFQASLSNIMGSSVESPDGLMDAKERGSSLAALERELARLHSELKFDSDPVVEMYYLYAKLMIYCFAFLPETPKADQTQYVTEAYLAATRIITLLTKTLEDTQLIELPIYVRQSVTYAALILFKLHLTPYLPEKYVDSARQSIVTVHRLYRNQLTAWATGVENDISRTASVLEKLNFVLITYPEIFVEEDGIISRMRSHLTGTLFYDLIYCVHEARRRQVDSEYNEMLEKNRKEQPVHTAATGSQDTEKRAPKRRLFPLPFYNQISKEDFETITQTTPGGTTVTTLVPTKNAILQAKKLQRSQGGQKGEPIRSINGIPLAMLDATGSVNGALVGDNLNSSVPQAAVAASAPPEPAAVAATVPPEPAPAPGGQSYPLFQPLYVQPAANVPMQRSASASVAEALPFRRPGMPKITSESIASGNPNSLFGNDGSPFPAIAQKSAKPAPPAKPDGQPAKQPAPYPNLNVFLGANASARMASYSSLMDAADPLAPDPDRAPLAAPGPLAHISELDSFFLQQSAGWIEGSSSNDDFLGWYDINMAPEF.

A compositionally biased stretch (basic and acidic residues) spans 1 to 10 (MSTDVSERGA). Disordered stretches follow at residues 1-54 (MSTD…SEES) and 67-90 (GQASPDRSKVSKQQNGASGHRPVT). The segment covering 11-21 (EAGSSSGLLSS) has biased composition (low complexity). The zn(2)-C6 fungal-type DNA-binding region spans 92–122 (CTHCRQHKIKCNASENFPSSCSRCERMGLQC). Over residues 206–218 (SSVKSSVNTPSGS) the composition is skewed to low complexity. 3 disordered regions span residues 206-227 (SSVKSSVNTPSGSYSASAVDVS), 738-759 (EKNRKEQPVHTAATGSQDTEKR), and 927-968 (ASGN…QPAP).

The protein localises to the nucleus. Putative transcription factor. The sequence is that of Putative transcription factor SEF1 (SEF1) from Eremothecium gossypii (strain ATCC 10895 / CBS 109.51 / FGSC 9923 / NRRL Y-1056) (Yeast).